The chain runs to 335 residues: MSVKVAINGFGRIGRNVLRAIIESGRTDIEVVAINDLGPVETNAHLFRFDSVHGRFPGEVKVAGDTIDVGRGPIKVTAVRNPAELPHKELGVDIALECTGIFTSRDKAAAHLAAGAKRVLVSAPADGADLTVVYGVNHEKLTNEHLVVSNASCTTNCLAPVAKVLNDAVGIEKGFMTTIHAYTGDQPTLDTMHKDLYRARAAAMSMIPTSTGAAKAVGLVLPELAGKLDGTSIRVPTPNVSVIDLKFVAKRATSKEEINEAIIAAASQQLKGILGFTDQPNVSIDFNHNPNSSTFHLDQTKVMEGTLVRVLSWYDNEWGFSNRMSDTAVAMGKLG.

Residues 12–13 (RI), Asp-36, Arg-80, and Ser-122 contribute to the NAD(+) site. Residues 152-154 (SCT), Thr-183, Arg-198, 211-212 (TG), and Arg-234 each bind D-glyceraldehyde 3-phosphate. Cys-153 serves as the catalytic Nucleophile. NAD(+) is bound at residue Asn-316.

This sequence belongs to the glyceraldehyde-3-phosphate dehydrogenase family. In terms of assembly, homotetramer.

It localises to the cytoplasm. The catalysed reaction is D-glyceraldehyde 3-phosphate + phosphate + NAD(+) = (2R)-3-phospho-glyceroyl phosphate + NADH + H(+). The protein operates within carbohydrate degradation; glycolysis; pyruvate from D-glyceraldehyde 3-phosphate: step 1/5. In terms of biological role, catalyzes the oxidative phosphorylation of glyceraldehyde 3-phosphate (G3P) to 1,3-bisphosphoglycerate (BPG) using the cofactor NAD. The first reaction step involves the formation of a hemiacetal intermediate between G3P and a cysteine residue, and this hemiacetal intermediate is then oxidized to a thioester, with concomitant reduction of NAD to NADH. The reduced NADH is then exchanged with the second NAD, and the thioester is attacked by a nucleophilic inorganic phosphate to produce BPG. In Xanthobacter flavus, this protein is Glyceraldehyde-3-phosphate dehydrogenase (gap).